The primary structure comprises 904 residues: Protein argonaute 4A (904 aa).

2 disordered regions span residues 1 to 33 (MESN…KKLS) and 143 to 166 (KSSA…VRRP). Residues 11 to 21 (LPPPPPLPPNA) are compositionally biased toward pro residues. A compositionally biased stretch (low complexity) spans 144–156 (SSANGGSPGNDSP). The PAZ domain maps to 274–388 (PVVDFLLANQ…FPIELCSLVP (115 aa)). Residues 557–865 (FLLCVLAERK…AAAQVSQFIK (309 aa)) form the Piwi domain. A disordered region spans residues 871–890 (ETSSSHGGHTSAGSAPVPEL). A compositionally biased stretch (low complexity) spans 872-885 (TSSSHGGHTSAGSA).

The protein belongs to the argonaute family. Ago subfamily.

Functionally, probably involved in the RNA silencing pathway. May bind to short RNAs such as microRNAs (miRNAs) or short interfering RNAs (siRNAs), and represses the translation of mRNAs which are complementary to them. The protein is Protein argonaute 4A (AGO4A) of Oryza sativa subsp. japonica (Rice).